Reading from the N-terminus, the 336-residue chain is Putative ataxin-3 homolog (336 aa).

The region spanning 10 to 193 is the Josephin domain; that stretch reads GGLLYHEVQE…KECPMATEGS (184 aa). Residue cysteine 23 is the Nucleophile of the active site. Catalysis depends on histidine 132, which acts as the Proton acceptor. The active site involves asparagine 147. In terms of domain architecture, UIM spans 244-263; the sequence is QEEADLNAAIAASLMDTGGP. Positions 281–336 are disordered; that stretch reads IESTSGEMSKDGNLEEQGANKSETSEPNSDNIESASGSNPKQNTTSLEGKESIKED. The segment covering 299–327 has biased composition (polar residues); the sequence is ANKSETSEPNSDNIESASGSNPKQNTTSL.

Its subcellular location is the nucleus. The enzyme catalyses Thiol-dependent hydrolysis of ester, thioester, amide, peptide and isopeptide bonds formed by the C-terminal Gly of ubiquitin (a 76-residue protein attached to proteins as an intracellular targeting signal).. In terms of biological role, interacts with key regulators of transcription and represses transcription. Acts as a histone-binding protein that regulates transcription. Acts as a deubiquitinating enzyme. This chain is Putative ataxin-3 homolog, found in Oryza sativa subsp. japonica (Rice).